The chain runs to 441 residues: Asparagine--tRNA ligase, mitochondrial (441 aa).

This sequence belongs to the class-II aminoacyl-tRNA synthetase family.

It is found in the mitochondrion. The enzyme catalyses tRNA(Asn) + L-asparagine + ATP = L-asparaginyl-tRNA(Asn) + AMP + diphosphate + H(+). The sequence is that of Asparagine--tRNA ligase, mitochondrial (slm5) from Schizosaccharomyces pombe (strain 972 / ATCC 24843) (Fission yeast).